The chain runs to 835 residues: Protein translocase subunit SecA (835 aa).

Residues Q85, 103–107, and D495 contribute to the ATP site; that span reads GEGKT. Positions 806 to 835 are disordered; it reads KVFLNNDSSDDESSKKRRTRKVRTSKKPWN. Residues 820-835 are compositionally biased toward basic residues; that stretch reads KKRRTRKVRTSKKPWN.

It belongs to the SecA family. As to quaternary structure, monomer and homodimer. Part of the essential Sec protein translocation apparatus which comprises SecA, SecYEG and auxiliary proteins SecDF. Other proteins may also be involved.

The protein localises to the cell membrane. It is found in the cytoplasm. The catalysed reaction is ATP + H2O + cellular proteinSide 1 = ADP + phosphate + cellular proteinSide 2.. Part of the Sec protein translocase complex. Interacts with the SecYEG preprotein conducting channel. Has a central role in coupling the hydrolysis of ATP to the transfer of proteins into and across the cell membrane, serving as an ATP-driven molecular motor driving the stepwise translocation of polypeptide chains across the membrane. The chain is Protein translocase subunit SecA from Onion yellows phytoplasma (strain OY-M).